The sequence spans 475 residues: Ribulose bisphosphate carboxylase large chain (475 aa).

Residues 1 to 2 (MV) constitute a propeptide that is removed on maturation. P3 carries the post-translational modification N-acetylproline. The residue at position 14 (K14) is an N6,N6,N6-trimethyllysine. N123 and T173 together coordinate substrate. Catalysis depends on K175, which acts as the Proton acceptor. K177 contributes to the substrate binding site. Mg(2+) is bound by residues K201, D203, and E204. K201 carries the post-translational modification N6-carboxylysine. The active-site Proton acceptor is the H294. Residues R295, H327, and S379 each coordinate substrate.

It belongs to the RuBisCO large chain family. Type I subfamily. Heterohexadecamer of 8 large chains and 8 small chains. Mg(2+) serves as cofactor.

Its subcellular location is the plastid. It localises to the chloroplast. It catalyses the reaction 2 (2R)-3-phosphoglycerate + 2 H(+) = D-ribulose 1,5-bisphosphate + CO2 + H2O. The enzyme catalyses D-ribulose 1,5-bisphosphate + O2 = 2-phosphoglycolate + (2R)-3-phosphoglycerate + 2 H(+). Functionally, ruBisCO catalyzes two reactions: the carboxylation of D-ribulose 1,5-bisphosphate, the primary event in carbon dioxide fixation, as well as the oxidative fragmentation of the pentose substrate in the photorespiration process. Both reactions occur simultaneously and in competition at the same active site. The chain is Ribulose bisphosphate carboxylase large chain from Dunaliella tertiolecta (Green alga).